Here is a 366-residue protein sequence, read N- to C-terminus: MSIVVQSAVTHFRPVMILAGGTGGHIFPGLAVAGALRARGVPVVWLGATGKMETHLVPKHGIEIQTIAVAGVRGRGMLALLGAPVRVLRAIFAAMGVLRRYRPRVVVSFGGFAAGPGGIAARFMRLPLIVHEQNRAPGMTNRVLARVAKRVLSGFPGSFVAEEVVGNPVRKDIAGLPAPGVRFSGRSGPVRLLVLGGSQGARVMNDALPVVLRVLSDSDVAVEVRHQCGEALCAETERAYAYAGVAARIEPFISDMAAAYAWADLVVCRAGASTLAELCAAGVGSVLIPFPAAVDDHQTRNAEYLVAAGAALLLQQDRALYVYLESVLRDLLSDPMRRLAMAEAARGLAKSDAAECIAEIVLEESI.

UDP-N-acetyl-alpha-D-glucosamine is bound by residues 22–24 (TGG), asparagine 134, arginine 170, serine 198, isoleucine 253, and glutamine 298.

Belongs to the glycosyltransferase 28 family. MurG subfamily.

It localises to the cell inner membrane. The enzyme catalyses di-trans,octa-cis-undecaprenyl diphospho-N-acetyl-alpha-D-muramoyl-L-alanyl-D-glutamyl-meso-2,6-diaminopimeloyl-D-alanyl-D-alanine + UDP-N-acetyl-alpha-D-glucosamine = di-trans,octa-cis-undecaprenyl diphospho-[N-acetyl-alpha-D-glucosaminyl-(1-&gt;4)]-N-acetyl-alpha-D-muramoyl-L-alanyl-D-glutamyl-meso-2,6-diaminopimeloyl-D-alanyl-D-alanine + UDP + H(+). Its pathway is cell wall biogenesis; peptidoglycan biosynthesis. Its function is as follows. Cell wall formation. Catalyzes the transfer of a GlcNAc subunit on undecaprenyl-pyrophosphoryl-MurNAc-pentapeptide (lipid intermediate I) to form undecaprenyl-pyrophosphoryl-MurNAc-(pentapeptide)GlcNAc (lipid intermediate II). This is UDP-N-acetylglucosamine--N-acetylmuramyl-(pentapeptide) pyrophosphoryl-undecaprenol N-acetylglucosamine transferase from Xylella fastidiosa (strain M12).